The sequence spans 281 residues: Light-independent protochlorophyllide reductase iron-sulfur ATP-binding protein (281 aa).

ATP-binding positions include 10 to 15 (GIGKST) and Lys39. Ser14 is a binding site for Mg(2+). Residues Cys95 and Cys129 each coordinate [4Fe-4S] cluster. Position 180–181 (180–181 (NR)) interacts with ATP.

This sequence belongs to the NifH/BchL/ChlL family. In terms of assembly, homodimer. Protochlorophyllide reductase is composed of three subunits; ChlL, ChlN and ChlB. The cofactor is [4Fe-4S] cluster.

It catalyses the reaction chlorophyllide a + oxidized 2[4Fe-4S]-[ferredoxin] + 2 ADP + 2 phosphate = protochlorophyllide a + reduced 2[4Fe-4S]-[ferredoxin] + 2 ATP + 2 H2O. It participates in porphyrin-containing compound metabolism; chlorophyll biosynthesis (light-independent). Component of the dark-operative protochlorophyllide reductase (DPOR) that uses Mg-ATP and reduced ferredoxin to reduce ring D of protochlorophyllide (Pchlide) to form chlorophyllide a (Chlide). This reaction is light-independent. The L component serves as a unique electron donor to the NB-component of the complex, and binds Mg-ATP. In Thermosynechococcus vestitus (strain NIES-2133 / IAM M-273 / BP-1), this protein is Light-independent protochlorophyllide reductase iron-sulfur ATP-binding protein.